The sequence spans 128 residues: Fluoride-specific ion channel FluC (128 aa).

A run of 4 helical transmembrane segments spans residues 6-26, 36-56, 68-88, and 99-119; these read LVAL…GLVL, LPTF…AGLA, VLLF…GLET, and IAAA…WLGF. Na(+) is bound by residues G76 and T79.

Belongs to the fluoride channel Fluc/FEX (TC 1.A.43) family.

The protein resides in the cell inner membrane. It catalyses the reaction fluoride(in) = fluoride(out). With respect to regulation, na(+) is not transported, but it plays an essential structural role and its presence is essential for fluoride channel function. In terms of biological role, fluoride-specific ion channel. Important for reducing fluoride concentration in the cell, thus reducing its toxicity. The chain is Fluoride-specific ion channel FluC from Methylobacillus flagellatus (strain ATCC 51484 / DSM 6875 / VKM B-1610 / KT).